A 463-amino-acid chain; its full sequence is uncharacterized protein (463 aa).

The TRAM domain occupies leucine 12–lysine 70. [4Fe-4S] cluster is bound by residues cysteine 83, cysteine 89, cysteine 92, and cysteine 171. S-adenosyl-L-methionine-binding residues include glutamine 295, tyrosine 324, glutamate 345, and aspartate 390. Cysteine 417 (nucleophile) is an active-site residue.

Belongs to the class I-like SAM-binding methyltransferase superfamily. RNA M5U methyltransferase family.

This is an uncharacterized protein from Synechocystis sp. (strain ATCC 27184 / PCC 6803 / Kazusa).